Consider the following 369-residue polypeptide: Phospho-N-acetylmuramoyl-pentapeptide-transferase (369 aa).

Transmembrane regions (helical) follow at residues 2–22 (IAIL…TPFF), 54–74 (GLVI…FLGL), 80–100 (GLLV…DDIL), 113–133 (FYKV…TFLV), 158–178 (ALFS…LLWI), 195–215 (LDGL…VIGF), 241–261 (PLDM…FLWW), 268–288 (IMMG…LSIL), 293–313 (LLFL…ILQI), and 347–367 (FWII…ADWL).

The protein belongs to the glycosyltransferase 4 family. MraY subfamily. It depends on Mg(2+) as a cofactor.

Its subcellular location is the cell membrane. It catalyses the reaction UDP-N-acetyl-alpha-D-muramoyl-L-alanyl-gamma-D-glutamyl-meso-2,6-diaminopimeloyl-D-alanyl-D-alanine + di-trans,octa-cis-undecaprenyl phosphate = di-trans,octa-cis-undecaprenyl diphospho-N-acetyl-alpha-D-muramoyl-L-alanyl-D-glutamyl-meso-2,6-diaminopimeloyl-D-alanyl-D-alanine + UMP. Its pathway is cell wall biogenesis; peptidoglycan biosynthesis. In terms of biological role, catalyzes the initial step of the lipid cycle reactions in the biosynthesis of the cell wall peptidoglycan: transfers peptidoglycan precursor phospho-MurNAc-pentapeptide from UDP-MurNAc-pentapeptide onto the lipid carrier undecaprenyl phosphate, yielding undecaprenyl-pyrophosphoryl-MurNAc-pentapeptide, known as lipid I. This chain is Phospho-N-acetylmuramoyl-pentapeptide-transferase, found in Tropheryma whipplei (strain Twist) (Whipple's bacillus).